A 159-amino-acid chain; its full sequence is Ribosomal RNA large subunit methyltransferase H (159 aa).

Position 108 (G108) interacts with S-adenosyl-L-methionine.

The protein belongs to the RNA methyltransferase RlmH family. As to quaternary structure, homodimer.

It localises to the cytoplasm. The enzyme catalyses pseudouridine(1915) in 23S rRNA + S-adenosyl-L-methionine = N(3)-methylpseudouridine(1915) in 23S rRNA + S-adenosyl-L-homocysteine + H(+). In terms of biological role, specifically methylates the pseudouridine at position 1915 (m3Psi1915) in 23S rRNA. The sequence is that of Ribosomal RNA large subunit methyltransferase H from Lactobacillus johnsonii (strain CNCM I-12250 / La1 / NCC 533).